A 121-amino-acid polypeptide reads, in one-letter code: NADH-ubiquinone oxidoreductase chain 3 (121 aa).

3 consecutive transmembrane segments (helical) span residues 11–31 (ILIFFAISSLLSSVIFLLSYF), 63–83 (FYLVAILFLIFDLEISFLFPW), and 90–110 (ISIIGFWSMIVFLVILTIGFI).

This sequence belongs to the complex I subunit 3 family.

The protein resides in the mitochondrion membrane. It catalyses the reaction a ubiquinone + NADH + 5 H(+)(in) = a ubiquinol + NAD(+) + 4 H(+)(out). Core subunit of the mitochondrial membrane respiratory chain NADH dehydrogenase (Complex I) that is believed to belong to the minimal assembly required for catalysis. Complex I functions in the transfer of electrons from NADH to the respiratory chain. The immediate electron acceptor for the enzyme is believed to be ubiquinone. The protein is NADH-ubiquinone oxidoreductase chain 3 (ND3) of Chondrus crispus (Carrageen Irish moss).